The chain runs to 788 residues: Protein translocase subunit SecA 2 (788 aa).

ATP-binding positions include Gln77, 95 to 99, and Asp491; that span reads GEGKT.

Belongs to the SecA family. In terms of assembly, monomer and homodimer. Part of the essential Sec protein translocation apparatus which comprises SecA, SecYEG and auxiliary proteins SecDF. Other proteins may also be involved.

Its subcellular location is the cell membrane. The protein resides in the cytoplasm. The enzyme catalyses ATP + H2O + cellular proteinSide 1 = ADP + phosphate + cellular proteinSide 2.. Functionally, part of the Sec protein translocase complex. Interacts with the SecYEG preprotein conducting channel. Has a central role in coupling the hydrolysis of ATP to the transfer of proteins into and across the cell membrane, serving as an ATP-driven molecular motor driving the stepwise translocation of polypeptide chains across the membrane. In Lactobacillus johnsonii (strain CNCM I-12250 / La1 / NCC 533), this protein is Protein translocase subunit SecA 2.